The chain runs to 248 residues: Segregation and condensation protein A (248 aa).

Belongs to the ScpA family. As to quaternary structure, component of a cohesin-like complex composed of ScpA, ScpB and the Smc homodimer, in which ScpA and ScpB bind to the head domain of Smc. The presence of the three proteins is required for the association of the complex with DNA.

It is found in the cytoplasm. Its function is as follows. Participates in chromosomal partition during cell division. May act via the formation of a condensin-like complex containing Smc and ScpB that pull DNA away from mid-cell into both cell halves. This Clostridium perfringens (strain ATCC 13124 / DSM 756 / JCM 1290 / NCIMB 6125 / NCTC 8237 / Type A) protein is Segregation and condensation protein A.